We begin with the raw amino-acid sequence, 488 residues long: Bifunctional protein GlmU (488 aa).

Positions M1–R237 are pyrophosphorylase. UDP-N-acetyl-alpha-D-glucosamine contacts are provided by residues L13–G16, K27, Q82, G87–T88, S110–D112, G149, E164, N179, and N235. D112 is a binding site for Mg(2+). N235 provides a ligand contact to Mg(2+). The segment at V238–A258 is linker. Residues G259–S488 are N-acetyltransferase. Residues R341 and K359 each contribute to the UDP-N-acetyl-alpha-D-glucosamine site. H371 serves as the catalytic Proton acceptor. 2 residues coordinate UDP-N-acetyl-alpha-D-glucosamine: Y374 and N385. Acetyl-CoA is bound by residues A388, N394–Y395, S413, A431, and R448. The disordered stretch occupies residues A459–S488. A compositionally biased stretch (basic residues) spans R478–S488.

In the N-terminal section; belongs to the N-acetylglucosamine-1-phosphate uridyltransferase family. The protein in the C-terminal section; belongs to the transferase hexapeptide repeat family. As to quaternary structure, homotrimer. Requires Mg(2+) as cofactor.

It localises to the cytoplasm. The catalysed reaction is alpha-D-glucosamine 1-phosphate + acetyl-CoA = N-acetyl-alpha-D-glucosamine 1-phosphate + CoA + H(+). It carries out the reaction N-acetyl-alpha-D-glucosamine 1-phosphate + UTP + H(+) = UDP-N-acetyl-alpha-D-glucosamine + diphosphate. The protein operates within nucleotide-sugar biosynthesis; UDP-N-acetyl-alpha-D-glucosamine biosynthesis; N-acetyl-alpha-D-glucosamine 1-phosphate from alpha-D-glucosamine 6-phosphate (route II): step 2/2. Its pathway is nucleotide-sugar biosynthesis; UDP-N-acetyl-alpha-D-glucosamine biosynthesis; UDP-N-acetyl-alpha-D-glucosamine from N-acetyl-alpha-D-glucosamine 1-phosphate: step 1/1. It participates in bacterial outer membrane biogenesis; LPS lipid A biosynthesis. In terms of biological role, catalyzes the last two sequential reactions in the de novo biosynthetic pathway for UDP-N-acetylglucosamine (UDP-GlcNAc). The C-terminal domain catalyzes the transfer of acetyl group from acetyl coenzyme A to glucosamine-1-phosphate (GlcN-1-P) to produce N-acetylglucosamine-1-phosphate (GlcNAc-1-P), which is converted into UDP-GlcNAc by the transfer of uridine 5-monophosphate (from uridine 5-triphosphate), a reaction catalyzed by the N-terminal domain. The polypeptide is Bifunctional protein GlmU (Anaeromyxobacter dehalogenans (strain 2CP-1 / ATCC BAA-258)).